We begin with the raw amino-acid sequence, 226 residues long: DnaJ homolog subfamily C member 30, mitochondrial (226 aa).

The N-terminal 38 residues, 1–38 (MAAMRWRWWQRLLPWRLLQARGFPQNSAPSLGLGARTY), are a transit peptide targeting the mitochondrion. The J domain maps to 49 to 114 (ALYDLLGVPS…TLRRKYDRGL (66 aa)). The interval 116–157 (SDEDLRGPGVRPSRTPAPDPGSPRTPPPTSRTHDGSRASPGA) is disordered. Over residues 130 to 144 (TPAPDPGSPRTPPPT) the composition is skewed to pro residues. A helical membrane pass occupies residues 208–225 (DTAAIFLIFSIFIIIGFY).

As to quaternary structure, associates with the ATP synthase complex. Interacts with MT-ATP6; interaction is direct. Interacts with ATP5MC2; interaction is direct. Expressed in brain, heart, kidney, liver, lung, spleen, stomach and testis. Highly expressed in the brain. In the neocortex, expressed in most, if not all, glutamatergic excitatory projection neurons (pyramidal) and many interneurons, with the strongest signal noticeably in large pyramidal neurons of layer 3C. Also present in pyramidal neurons of layer 3C PNs of the superior temporal cortex, as well as in pyramidal neurons (Betz cells) of the layer 5B primary motor cortex (at protein level).

The protein localises to the mitochondrion inner membrane. Mitochondrial protein enriched in neurons that acts as a regulator of mitochondrial respiration. Associates with the ATP synthase complex and facilitates ATP synthesis. May be a chaperone protein involved in the turnover of the subunits of mitochondrial complex I N-module. It facilitates the degradation of N-module subunits damaged by oxidative stress, and contributes to complex I functional efficiency. This is DnaJ homolog subfamily C member 30, mitochondrial from Homo sapiens (Human).